The primary structure comprises 352 residues: Peptide chain release factor 1 (352 aa).

N5-methylglutamine is present on glutamine 233. Residues 288–309 (NAKDRKEQVGSGDRSERIRTYN) form a disordered region. Over residues 289–306 (AKDRKEQVGSGDRSERIR) the composition is skewed to basic and acidic residues.

The protein belongs to the prokaryotic/mitochondrial release factor family. In terms of processing, methylated by PrmC. Methylation increases the termination efficiency of RF1.

The protein resides in the cytoplasm. Its function is as follows. Peptide chain release factor 1 directs the termination of translation in response to the peptide chain termination codons UAG and UAA. In Helicobacter pylori (strain ATCC 700392 / 26695) (Campylobacter pylori), this protein is Peptide chain release factor 1 (prfA).